The sequence spans 1873 residues: Voltage-dependent L-type calcium channel subunit alpha-1S (1873 aa).

Positions 1–23 (MEPSSPQDEGLRKKQPKKPLPEV) are disordered. Residues 1–51 (MEPSSPQDEGLRKKQPKKPLPEVLPRPPRALFCLTLQNPLRKACISIVEWK) are Cytoplasmic-facing. The I repeat unit spans residues 38–337 (NPLRKACISI…LVLGVLSGEF (300 aa)). The chain crosses the membrane as a helical span at residues 52 to 70 (PFETIILLTIFANCVALAV). At 71 to 85 (YLPMPEDDNNSLNLG) the chain is on the extracellular side. An N-linked (GlcNAc...) asparagine glycan is attached at asparagine 79. Residues 86 to 106 (LEKLEYFFLTVFSIEAAMKII) form a helical membrane-spanning segment. The Cytoplasmic portion of the chain corresponds to 107 to 115 (AYGFLFHQD). The chain crosses the membrane as a helical span at residues 116 to 136 (AYLRSGWNVLDFIIVFLGVFT). Over 137-160 (AILEQVNVIQSNTAPMSSKGAGLD) the chain is Extracellular. Residues 161–179 (VKALRAFRVLRPLRLVSGV) form a helical membrane-spanning segment. Residues 180–196 (PSLQVVLNSIFKAMLPL) lie on the Cytoplasmic side of the membrane. A helical membrane pass occupies residues 197–218 (FHIALLVLFMVIIYAIIGLELF). The Extracellular segment spans residues 219–279 (KGKMHKTCYY…HGITHFDNFG (61 aa)). Disulfide bonds link cysteine 226/cysteine 254 and cysteine 245/cysteine 261. Asparagine 257 carries an N-linked (GlcNAc...) asparagine glycan. Residues 280–301 (FSMLTVYQCITMEGWTDVLYWV) constitute an intramembrane region (pore-forming). Residues 290–293 (TMEG) carry the Selectivity filter of repeat I motif. Ca(2+) is bound at residue glutamate 292. Over 302-309 (NDAIGNEW) the chain is Extracellular. Residues 310-330 (PWIYFVTLILLGSFFILNLVL) form a helical membrane-spanning segment. Topologically, residues 331 to 432 (GVLSGEFTKE…WKCHDLVKSR (102 aa)) are cytoplasmic. Residues 357–374 (QQLEEDLRGYMSWITQGE) form a binding to the beta subunit region. Phosphoserine occurs at positions 393 and 397. The II repeat unit spans residues 418–664 (NRVFRWKCHD…VFLAIAVDNL (247 aa)). Residues 433-451 (VFYWLVILIVALNTLSIAS) traverse the membrane as a helical segment. Topologically, residues 452–462 (EHHNQPLWLTH) are extracellular. Residues 463-483 (LQDIANRVLLSLFTIEMLLKM) traverse the membrane as a helical segment. Over 484 to 494 (YGLGLRQYFMS) the chain is Cytoplasmic. The chain crosses the membrane as a helical span at residues 495–514 (IFNRFDCFVVCSGILELLLV). The Extracellular portion of the chain corresponds to 515 to 523 (ESGAMTPLG). The chain crosses the membrane as a helical span at residues 524–542 (ISVLRCIRLLRLFKITKYW). Over 543–561 (TSLSNLVASLLNSIRSIAS) the chain is Cytoplasmic. The chain crosses the membrane as a helical span at residues 562–581 (LLLLLFLFIIIFALLGMQLF). Over 582 to 601 (GGRYDFEDTEVRRSNFDNFP) the chain is Extracellular. An intramembrane region (pore-forming) is located at residues 602 to 623 (QALISVFQVLTGEDWNSVMYNG). The Selectivity filter of repeat II motif lies at 612 to 615 (TGED). Glutamate 614 provides a ligand contact to Ca(2+). Residues 624–633 (IMAYGGPSYP) are Extracellular-facing. A helical membrane pass occupies residues 634-653 (GVLVCIYFIILFVCGNYILL). Residues 654 to 799 (NVFLAIAVDN…VLCHRIVNAT (146 aa)) lie on the Cytoplasmic side of the membrane. Disordered stretches follow at residues 673–717 (AQKA…IPTT) and 731–757 (EVKDPYPSADFPGDDEEDEPEIPVSPR). Serine 687 carries the post-translational modification Phosphoserine; by PKA. Residues 690–711 (LPDKTEEEKSVMAKKLEQKPKG) are compositionally biased toward basic and acidic residues. Over residues 742–751 (PGDDEEDEPE) the composition is skewed to acidic residues. An interaction with STAC, STAC2 and STAC3 (via SH3 domains) region spans residues 747–760 (EDEPEIPVSPRPRP). One copy of the III repeat lies at 786–1068 (NKVRVLCHRI…IFVGFVIVTF (283 aa)). A helical transmembrane segment spans residues 800–818 (WFTNFILLFILLSSAALAA). At 819–830 (EDPIRAESVRNQ) the chain is on the extracellular side. Residues 831–850 (ILGYFDIAFTSVFTVEIVLK) form a helical membrane-spanning segment. Residues 851 to 866 (MTTYGAFLHKGSFCRN) lie on the Cytoplasmic side of the membrane. Residues 867 to 885 (YFNILDLLVVAVSLISMGL) traverse the membrane as a helical segment. At 886-892 (ESSTISV) the chain is on the extracellular side. Residues 893-911 (VKILRVLRVLRPLRAINRA) traverse the membrane as a helical segment. At 912–930 (KGLKHVVQCVFVAIRTIGN) the chain is on the cytoplasmic side. Residues 931–950 (IVLVTTLLQFMFACIGVQLF) traverse the membrane as a helical segment. Residues 951-1000 (KGKFFSCNDLSKMTEEECRGYYYVYKDGDPTQMELRPRQWIHNDFHFDNV) are Extracellular-facing. A disulfide bridge links cysteine 957 with cysteine 968. The interval 988–1077 (RQWIHNDFHF…FQEQGETEYK (90 aa)) is dihydropyridine binding. The pore-forming intramembrane region spans 1001 to 1021 (LSAMMSLFTVSTFEGWPQLLY). Positions 1012–1015 (TFEG) match the Selectivity filter of repeat III motif. Position 1014 (glutamate 1014) interacts with Ca(2+). The Extracellular segment spans residues 1022-1038 (RAIDSNEEDMGPVYNNR). Residues 1039–1060 (VEMAIFFIIYIILIAFFMMNIF) traverse the membrane as a helical segment. Residues 1061–1118 (VGFVIVTFQEQGETEYKNCELDKNQRQCVQYALKARPLRCYIPKNPYQYQVWYVVTSS) lie on the Cytoplasmic side of the membrane. The IV repeat unit spans residues 1105–1384 (NPYQYQVWYV…LFVAVIMDNF (280 aa)). The chain crosses the membrane as a helical span at residues 1119–1140 (YFEYLMFALIMLNTICLGMQHY). Residues 1141–1148 (HQSEEMNH) lie on the Extracellular side of the membrane. A helical membrane pass occupies residues 1149 to 1170 (ISDILNVAFTIIFTLEMILKLL). The Cytoplasmic portion of the chain corresponds to 1171–1180 (AFKARGYFGD). The helical transmembrane segment at 1181–1200 (PWNVFDFLIVIGSIIDVILS) threads the bilayer. Residues 1201–1231 (EIDTFLASSGGLYCLGGGCGNVDPDESARIS) are Extracellular-facing. Residues 1232–1250 (SAFFRLFRVMRLIKLLSRA) form a helical membrane-spanning segment. The Cytoplasmic portion of the chain corresponds to 1251–1268 (EGVRTLLWTFIKSFQALP). Residues 1269 to 1289 (YVALLIVMLFFIYAVIGMQMF) form a helical membrane-spanning segment. Residues 1290-1311 (GKIALVDGTQINRNNNFQTFPQ) are Extracellular-facing. Residues 1312-1330 (AVLLLFRCATGEAWQEILL) constitute an intramembrane region (pore-forming). Residues 1321–1324 (TGEA) carry the Selectivity filter of repeat IV motif. Topologically, residues 1331 to 1356 (ACSYGKLCDPESDYAPGEEYTCGTNF) are extracellular. The dihydropyridine binding stretch occupies residues 1337–1403 (LCDPESDYAP…LGPHHLDEFK (67 aa)). An intrachain disulfide couples cysteine 1338 to cysteine 1352. The tract at residues 1349-1391 (EYTCGTNFAYYYFISFYMLCAFLIINLFVAVIMDNFDYLTRDW) is phenylalkylamine binding. Residues 1357–1381 (AYYYFISFYMLCAFLIINLFVAVIM) traverse the membrane as a helical segment. Residues 1382–1873 (DNFDYLTRDW…SQETLIPPRP (492 aa)) are Cytoplasmic-facing. The segment at 1522–1542 (KFYATFLIQEHFRKFMKRQEE) is interaction with calmodulin. Serine 1575 carries the post-translational modification Phosphoserine; by PKA and CAMK2. Threonine 1579 carries the phosphothreonine; by CK2 modification. Residue serine 1617 is modified to Phosphoserine; by PKA. Disordered stretches follow at residues 1689-1782 (EFPG…RPAP) and 1841-1873 (GMASVPGSLSRRSSLGSLDQVQGSQETLIPPRP). The span at 1847 to 1858 (GSLSRRSSLGSL) shows a compositional bias: low complexity.

This sequence belongs to the calcium channel alpha-1 subunit (TC 1.A.1.11) family. CACNA1S subfamily. Component of a calcium channel complex consisting of a pore-forming alpha subunit (CACNA1S) and the ancillary subunits CACNB1 or CACNB2, CACNG1 and CACNA2D1. The channel complex contains alpha, beta, gamma and delta subunits in a 1:1:1:1 ratio, i.e. it contains either CACNB1 or CACNB2. CACNA1S channel activity is modulated by the auxiliary subunits (CACNB1 or CACNB2, CACNG1 and CACNA2D1). Interacts with DYSF and JSRP1. Interacts with RYR1. Interacts with STAC, STAC2 and STAC3 (via their SH3 domains). Interaction with STAC3 promotes expression at the cell membrane. Interaction with STAC2 promotes expression at the cell membrane, but with much lower efficiency than STAC3. Interaction with STAC1 leads to very low levels expression at the cell membrane, much less than the levels observed upon interaction with STAC3 and STAC2. Interacts with CALM. In terms of processing, the alpha-1S subunit is found in two isoforms in the skeletal muscle: a minor form of 212 kDa containing the complete amino acid sequence, and a major form of 190 kDa derived from the full-length form by post-translational proteolysis close to Phe-1690. Phosphorylated. Phosphorylation by PKA activates the calcium channel. Both the minor and major forms are phosphorylated in vitro by PKA. Phosphorylation at Ser-1575 is involved in beta-adrenergic-mediated regulation of the channel. As to expression, detected in skeletal muscle T-tubules (at protein level).

It localises to the cell membrane. The protein resides in the sarcolemma. It is found in the T-tubule. It catalyses the reaction Ca(2+)(in) = Ca(2+)(out). Its activity is regulated as follows. Channel activity is blocked by dihydropyridines (DHP), phenylalkylamines, and by benzothiazepines. Pore-forming, alpha-1S subunit of the voltage-gated calcium channel that gives rise to L-type calcium currents in skeletal muscle. Calcium channels containing the alpha-1S subunit play an important role in excitation-contraction coupling in skeletal muscle via their interaction with RYR1, which triggers Ca(2+) release from the sarcplasmic reticulum and ultimately results in muscle contraction. Long-lasting (L-type) calcium channels belong to the 'high-voltage activated' (HVA) group. This chain is Voltage-dependent L-type calcium channel subunit alpha-1S (CACNA1S), found in Oryctolagus cuniculus (Rabbit).